We begin with the raw amino-acid sequence, 231 residues long: Probable septum site-determining protein MinC (231 aa).

Residues 101–125 (GKEKAPRPAPTPQAPAQNTTPVTKT) are disordered. Positions 114–123 (APAQNTTPVT) are enriched in low complexity.

The protein belongs to the MinC family. In terms of assembly, interacts with MinD and FtsZ.

In terms of biological role, cell division inhibitor that blocks the formation of polar Z ring septums. Rapidly oscillates between the poles of the cell to destabilize FtsZ filaments that have formed before they mature into polar Z rings. Prevents FtsZ polymerization. The sequence is that of Probable septum site-determining protein MinC from Escherichia coli (strain ATCC 8739 / DSM 1576 / NBRC 3972 / NCIMB 8545 / WDCM 00012 / Crooks).